The chain runs to 698 residues: Epithelial sodium channel subunit alpha (698 aa).

The interval 1–70 is disordered; it reads MLDHTRAPEL…SAPRQPTEEE (70 aa). At 1–110 the chain is on the cytoplasmic side; sequence MLDHTRAPEL…CSKHNRMKTA (110 aa). Residues 111-131 form a helical membrane-spanning segment; that stretch reads FWAVLWLCTFGMMYWQFALLF. Residues 132–589 are Extracellular-facing; that stretch reads EEYLSYPVSL…SQWSLWFGSS (458 aa). 3 cysteine pairs are disulfide-bonded: cysteine 158-cysteine 332, cysteine 256-cysteine 263, and cysteine 309-cysteine 316. The N-linked (GlcNAc...) asparagine glycan is linked to asparagine 190. Residues 200-270 form a gating release of inhibition by proteolysis (GRIP); protease-sensitive region that is responsible for the proteolytic activation of the channel region; it reads RRRSSRDLLG…SDCFYQTYSS (71 aa). Residues 213-243 are disordered; the sequence is HPLQRLRTPPPPYSGRTARSGSSSVRDNNPQ. Residues 229–243 are compositionally biased toward polar residues; that stretch reads TARSGSSSVRDNNPQ. Asparagine 259 is a glycosylation site (N-linked (GlcNAc...) asparagine). 3 N-linked (GlcNAc...) asparagine glycosylation sites follow: asparagine 320, asparagine 339, and asparagine 424. Disulfide bonds link cysteine 421–cysteine 506, cysteine 443–cysteine 483, cysteine 443–cysteine 502, cysteine 447–cysteine 498, cysteine 456–cysteine 483, cysteine 456–cysteine 506, and cysteine 458–cysteine 472. An N-linked (GlcNAc...) asparagine glycan is attached at asparagine 538. Residues 590 to 610 form a helical membrane-spanning segment; sequence VLSVVEMAELIFDLLVITLLM. Over 611-698 the chain is Cytoplasmic; sequence LLRRFRSRYW…DCSACALAAL (88 aa). Residues 637 to 663 are disordered; that stretch reads ASSFPSRFCPHPTSPPPSLPQQGMTPP. The PY motif; recruits WW domain-containing proteins and is thereby required for ubiquitination and inhibition of the channel by NEDD4 and NEDD4L motif lies at 669 to 673; that stretch reads PPPAY.

It belongs to the amiloride-sensitive sodium channel (TC 1.A.6) family. SCNN1A subfamily. In terms of assembly, heterotrimer; containing an alpha/SCNN1A, a beta/SCNN1B and a gamma/SCNN1G subunit. Interacts with WWP1 (via WW domains). Interacts with WWP2 (via WW domains); inhibits the channel. Interacts with BPIFA1; the interaction is indirect via SCNN1B and inhibits the proteolytic processing of SCNN1A and SCNN1G and the activation of ENaC. Interacts with the full-length immature form of PCSK9 (pro-PCSK9). Ubiquitinated. Can be ubiquitinated at multiple sites and undergo monoubiquitination and polyubiquitination. Ubiquitination by NEDD4 or NEDD4L inhibits the ENaC channel through endocytosis, intracellular retention and degradation of its individual subunits. In terms of processing, N-glycosylated. Post-translationally, ENaC is activated through the proteolytic maturation of its subunits. Furin cleaves the SCNN1A subunit, which results in a stepwise increase in the open probability of the channel due to the release of an inhibitory tract. BPIFA1, which is recruited by the SCNN1B subunit, prevents the proteolytic activation of ENaC. Detected in kidney, lung and testis (at protein level). In the testis, detected within the seminiferous tubules but not in the interstitial cells (at protein level).

The protein localises to the apical cell membrane. The protein resides in the cell projection. It localises to the cilium. It is found in the cytoplasmic granule. Its subcellular location is the cytoplasm. The protein localises to the cytoplasmic vesicle. The protein resides in the secretory vesicle. It localises to the acrosome. It is found in the flagellum. It carries out the reaction Na(+)(in) = Na(+)(out). With respect to regulation, originally identified and characterized by its inhibition by the diuretic drug amiloride. This is one of the three pore-forming subunits of the heterotrimeric epithelial sodium channel (ENaC), a critical regulator of sodium balance and fluid homeostasis. ENaC operates in epithelial tissues, where it mediates the electrodiffusion of sodium ions from extracellular fluid through the apical membrane of cells, with water following osmotically. It plays a key role in maintaining sodium homeostasis through electrogenic sodium reabsorption in the kidneys. Additionally, ENaC is essential for airway surface liquid homeostasis, which is crucial for proper mucus clearance. This chain is Epithelial sodium channel subunit alpha, found in Rattus norvegicus (Rat).